Here is a 344-residue protein sequence, read N- to C-terminus: Arginine N-succinyltransferase (344 aa).

Residue L125 coordinates succinyl-CoA. The active-site Proton donor is the H229.

This sequence belongs to the arginine N-succinyltransferase family.

The catalysed reaction is succinyl-CoA + L-arginine = N(2)-succinyl-L-arginine + CoA + H(+). It participates in amino-acid degradation; L-arginine degradation via AST pathway; L-glutamate and succinate from L-arginine: step 1/5. Catalyzes the transfer of succinyl-CoA to arginine to produce N(2)-succinylarginine. In Shigella flexneri, this protein is Arginine N-succinyltransferase.